The following is a 513-amino-acid chain: Glucose-1-phosphate adenylyltransferase small subunit, chloroplastic/amyloplastic (513 aa).

Residues 1–64 (MAMAAAASPS…RRPFFFSPRA (64 aa)) constitute a chloroplast transit peptide.

This sequence belongs to the bacterial/plant glucose-1-phosphate adenylyltransferase family. Heterotetramer. Leaves and starchy endosperm.

The protein localises to the plastid. The protein resides in the chloroplast. Its subcellular location is the amyloplast. The catalysed reaction is alpha-D-glucose 1-phosphate + ATP + H(+) = ADP-alpha-D-glucose + diphosphate. It participates in glycan biosynthesis; starch biosynthesis. Activated by 3'phosphoglycerate, inhibited by orthophosphate. Allosteric regulation. Functionally, this protein plays a role in synthesis of starch. It catalyzes the synthesis of the activated glycosyl donor, ADP-glucose from Glc-1-P and ATP. This Hordeum vulgare (Barley) protein is Glucose-1-phosphate adenylyltransferase small subunit, chloroplastic/amyloplastic.